Consider the following 201-residue polypeptide: Small ribosomal subunit protein uS4 (201 aa).

The disordered stretch occupies residues 19-41; the sequence is LVGGSSAYEKRPYPPGQHGRARI. One can recognise an S4 RNA-binding domain in the interval 91-157; that stretch reads SRLDNVVYRA…LPFEVARETA (67 aa).

It belongs to the universal ribosomal protein uS4 family. Part of the 30S ribosomal subunit. Contacts protein S5. The interaction surface between S4 and S5 is involved in control of translational fidelity.

One of the primary rRNA binding proteins, it binds directly to 16S rRNA where it nucleates assembly of the body of the 30S subunit. Its function is as follows. With S5 and S12 plays an important role in translational accuracy. This chain is Small ribosomal subunit protein uS4, found in Mycobacteroides abscessus (strain ATCC 19977 / DSM 44196 / CCUG 20993 / CIP 104536 / JCM 13569 / NCTC 13031 / TMC 1543 / L948) (Mycobacterium abscessus).